We begin with the raw amino-acid sequence, 654 residues long: MICOS complex subunit MIC60-2 (654 aa).

Residues Met-1–Leu-12 constitute a mitochondrion transit peptide. Topologically, residues Ala-13–Ser-20 are mitochondrial matrix. Residues Ser-21–Gly-43 form a helical membrane-spanning segment. Topologically, residues Tyr-44–Tyr-654 are mitochondrial intermembrane. The span at Leu-115–Glu-129 shows a compositional bias: basic and acidic residues. Residues Leu-115 to Asn-140 are disordered.

Belongs to the MICOS complex subunit Mic60 family. In terms of assembly, component of the mitochondrial contact site and cristae organizing system (MICOS) complex. Expressed in the gonads and muscle cells.

It is found in the mitochondrion inner membrane. Its subcellular location is the cytoplasm. In terms of biological role, sustains mitochondrial morphology probably through maintaining cristae morphology. May act as a component of the MICOS complex, a large protein complex of the mitochondria. The sequence is that of MICOS complex subunit MIC60-2 from Caenorhabditis elegans.